The following is a 390-amino-acid chain: Enoyl-[acyl-carrier-protein] reductase [NADH], chloroplastic (390 aa).

A chloroplast-targeting transit peptide spans 1–74; that stretch reads MAATAASSLQ…CKRPFSFSTR (74 aa). The NADP(+) site is built by leucine 53 and asparagine 170. The Proton donor role is filled by serine 239. Residues lysine 282 and serine 314 each coordinate NADP(+). Lysine 282 serves as the catalytic Lowers pKa of active site Tyr.

Belongs to the short-chain dehydrogenases/reductases (SDR) family. FabI subfamily. In terms of assembly, homotetramer. As to expression, expressed in flowers and siliques and at lower levels in roots and leaves (at protein level).

The protein resides in the plastid. It localises to the chloroplast. The enzyme catalyses a 2,3-saturated acyl-[ACP] + NAD(+) = a (2E)-enoyl-[ACP] + NADH + H(+). It functions in the pathway lipid metabolism; fatty acid biosynthesis. Inhibited by the phytotoxin cyperin and the synthetic antimicrobial compound triclosan. Catalyzes the NAD-dependent reduction of a carbon-carbon double bond in an enoyl moiety that is covalently linked to an acyl carrier protein (ACP). Catalyzes the last reduction step in the de novo synthesis cycle of fatty acids. Involved in the elongation cycle of fatty acids which are used in lipid metabolism. Required for normal plant growth. The protein is Enoyl-[acyl-carrier-protein] reductase [NADH], chloroplastic (MOD1) of Arabidopsis thaliana (Mouse-ear cress).